The following is an 85-amino-acid chain: MKTFVFIVLVALAFVLTAAKEERANPSELVSALAELVMLDAERGVDKPGCRYLFGGCKSDDDCCPRLGCKGKGHDYCAWDGTFSD.

The signal sequence occupies residues 1–19 (MKTFVFIVLVALAFVLTAA). A propeptide spanning residues 20-43 (KEERANPSELVSALAELVMLDAER) is cleaved from the precursor. 3 cysteine pairs are disulfide-bonded: Cys-50-Cys-64, Cys-57-Cys-69, and Cys-63-Cys-77.

The protein belongs to the neurotoxin 10 (Hwtx-1) family. Expressed by the venom gland.

It localises to the secreted. Multimodal toxin that enhances nociceptor excitability mainly by the simultaneous stimulation of repetitive firing (through Nav1.8/SCN10A channel current enhancement) and impairment of repolarization (by inhibiting delayed rectifier current of Kv2.1/KCNB1), with a potential contribution from tetrodotoxin-sensitive voltage-gated sodium channels (Nav) modified excitability. Enhances Nav1.8/SCN10A currents (EC(50)=1.1 uM), modifies the channel gating by a right-shift in steady-state inactivation and delays open-state inactivation. Also decreases Kv2.1/KCNB1 currents (IC(50)=0.43 uM) and causes a depolarizing shift in the voltage dependence of activation without change in steady-state inactivation. In addition, inhibits peak currents of human sodium channels (Nav1.1 to Nav1.7, IC(50)=0.38-2.3 uM) and delays fast inactivation of Nav1.1/SCN1A, Nav1.3/SCN3A, Nav1.6/SCN8A, and Nav1.7/SCN9A. In small dorsal root ganglion neurons, induces hyperexcitability by enhancing tetrodotoxin-resistant sodium currents, impairing repolarization and lowering the threshold of action potential firing, consistent with the severe pain associated with envenomation. In vivo, elicits nocifensive behavior in mice after intraplantar injection. The protein is Delta/kappa-theraphotoxin-Pm1a of Pelinobius muticus (King baboon spider).